Reading from the N-terminus, the 455-residue chain is Fumarate hydratase class II (455 aa).

Substrate-binding positions include 96-98, 122-125, 132-134, and Thr-180; these read SGT, HPND, and SSN. His-181 (proton donor/acceptor) is an active-site residue. The active site involves Ser-311. Substrate is bound by residues Ser-312 and 317–319; that span reads KVN.

The protein belongs to the class-II fumarase/aspartase family. Fumarase subfamily. In terms of assembly, homotetramer.

The protein resides in the cytoplasm. It carries out the reaction (S)-malate = fumarate + H2O. Its pathway is carbohydrate metabolism; tricarboxylic acid cycle; (S)-malate from fumarate: step 1/1. Involved in the TCA cycle. Catalyzes the stereospecific interconversion of fumarate to L-malate. This is Fumarate hydratase class II from Listeria monocytogenes serovar 1/2a (strain ATCC BAA-679 / EGD-e).